A 448-amino-acid polypeptide reads, in one-letter code: Probable glycine dehydrogenase (decarboxylating) subunit 1 (448 aa).

It belongs to the GcvP family. N-terminal subunit subfamily. As to quaternary structure, the glycine cleavage system is composed of four proteins: P, T, L and H. In this organism, the P 'protein' is a heterodimer of two subunits.

The catalysed reaction is N(6)-[(R)-lipoyl]-L-lysyl-[glycine-cleavage complex H protein] + glycine + H(+) = N(6)-[(R)-S(8)-aminomethyldihydrolipoyl]-L-lysyl-[glycine-cleavage complex H protein] + CO2. Its function is as follows. The glycine cleavage system catalyzes the degradation of glycine. The P protein binds the alpha-amino group of glycine through its pyridoxal phosphate cofactor; CO(2) is released and the remaining methylamine moiety is then transferred to the lipoamide cofactor of the H protein. The chain is Probable glycine dehydrogenase (decarboxylating) subunit 1 from Listeria innocua serovar 6a (strain ATCC BAA-680 / CLIP 11262).